Here is a 143-residue protein sequence, read N- to C-terminus: Putative pre-16S rRNA nuclease (143 aa).

The protein belongs to the YqgF nuclease family.

It is found in the cytoplasm. Functionally, could be a nuclease involved in processing of the 5'-end of pre-16S rRNA. The sequence is that of Putative pre-16S rRNA nuclease from Mesomycoplasma hyopneumoniae (strain 232) (Mycoplasma hyopneumoniae).